We begin with the raw amino-acid sequence, 241 residues long: U2 small nuclear ribonucleoprotein B'' (241 aa).

Positions 12 to 91 (QTLYVNNLYE…RPMKIQYCKS (80 aa)) constitute an RRM 1 domain. Positions 99–126 (LDGTYMEKKREREENDKKGSNKKQDRKS) are enriched in basic and acidic residues. A disordered region spans residues 99–169 (LDGTYMEKKR…PRDDPPNKTL (71 aa)). Over residues 129–152 (QQQQQQKRPGAPTSTTSTTSPTTS) the composition is skewed to low complexity. Residues 167–241 (KTLFVENLPD…KPMVVSFAAQ (75 aa)) form the RRM 2 domain.

It belongs to the RRM U1 A/B'' family. In terms of assembly, identified in the spliceosome B complex. Identified in the spliceosome C complex.

It is found in the nucleus. Involved in pre-mRNA splicing as component of the spliceosome. Associated with sn-RNP U2, where it contributes to the binding of stem loop IV of U2 snRNA. The protein is U2 small nuclear ribonucleoprotein B'' (snrpb2) of Dictyostelium discoideum (Social amoeba).